We begin with the raw amino-acid sequence, 137 residues long: Basic phospholipase A2 3 (137 aa).

Residues 1 to 11 (LVAVCVSLLGA) form the signal peptide. The propeptide occupies 12-19 (ANIPPQPL). 7 cysteine pairs are disulfide-bonded: C30-C89, C44-C136, C46-C62, C61-C117, C68-C110, C78-C103, and C96-C108. Residues Y45, G47, and G49 each contribute to the Ca(2+) site. H65 is an active-site residue. D66 serves as a coordination point for Ca(2+). Residue D111 is part of the active site.

This sequence belongs to the phospholipase A2 family. Group I subfamily. D49 sub-subfamily. As to quaternary structure, monomer, or homotrimer. Was firstly described as a trimer, but has been reinterpreted with the possibility of being a monomer. The cofactor is Ca(2+). Expressed by the venom gland.

The protein resides in the secreted. The catalysed reaction is a 1,2-diacyl-sn-glycero-3-phosphocholine + H2O = a 1-acyl-sn-glycero-3-phosphocholine + a fatty acid + H(+). Snake venom phospholipase A2 (PLA2) that shows anticoagulant and neurotoxic activities. PLA2 catalyzes the calcium-dependent hydrolysis of the 2-acyl groups in 3-sn-phosphoglycerides. The sequence is that of Basic phospholipase A2 3 from Bungarus caeruleus (Indian krait).